We begin with the raw amino-acid sequence, 348 residues long: Phenylalanine--tRNA ligase alpha subunit (348 aa).

Glutamate 259 contacts Mg(2+).

This sequence belongs to the class-II aminoacyl-tRNA synthetase family. Phe-tRNA synthetase alpha subunit type 1 subfamily. As to quaternary structure, tetramer of two alpha and two beta subunits. Requires Mg(2+) as cofactor.

The protein resides in the cytoplasm. It carries out the reaction tRNA(Phe) + L-phenylalanine + ATP = L-phenylalanyl-tRNA(Phe) + AMP + diphosphate + H(+). In Latilactobacillus sakei subsp. sakei (strain 23K) (Lactobacillus sakei subsp. sakei), this protein is Phenylalanine--tRNA ligase alpha subunit.